Consider the following 338-residue polypeptide: Aspartate carbamoyltransferase catalytic subunit (338 aa).

Residues Arg-72 and Thr-73 each contribute to the carbamoyl phosphate site. An L-aspartate-binding site is contributed by Lys-100. Arg-122, His-152, and Gln-155 together coordinate carbamoyl phosphate. L-aspartate contacts are provided by Arg-186 and Arg-243. Positions 284 and 285 each coordinate carbamoyl phosphate.

It belongs to the aspartate/ornithine carbamoyltransferase superfamily. ATCase family. Heterododecamer (2C3:3R2) of six catalytic PyrB chains organized as two trimers (C3), and six regulatory PyrI chains organized as three dimers (R2).

It carries out the reaction carbamoyl phosphate + L-aspartate = N-carbamoyl-L-aspartate + phosphate + H(+). The protein operates within pyrimidine metabolism; UMP biosynthesis via de novo pathway; (S)-dihydroorotate from bicarbonate: step 2/3. In terms of biological role, catalyzes the condensation of carbamoyl phosphate and aspartate to form carbamoyl aspartate and inorganic phosphate, the committed step in the de novo pyrimidine nucleotide biosynthesis pathway. This is Aspartate carbamoyltransferase catalytic subunit from Acinetobacter baumannii (strain ACICU).